A 119-amino-acid polypeptide reads, in one-letter code: Protein Wnt-4 (119 aa).

Ser1 carries O-palmitoleoyl serine; by PORCN lipidation. 2 disulfide bridges follow: Cys69–Cys100 and Cys85–Cys95. Asn86 is a glycosylation site (N-linked (GlcNAc...) asparagine).

It belongs to the Wnt family. Palmitoleoylation is required for efficient binding to frizzled receptors. Depalmitoleoylation leads to Wnt signaling pathway inhibition.

It is found in the secreted. The protein localises to the extracellular space. The protein resides in the extracellular matrix. Its function is as follows. Ligand for members of the frizzled family of seven transmembrane receptors. Plays an important role in embryonic development. In Sceloporus occidentalis (Western fence lizard), this protein is Protein Wnt-4 (WNT-4).